An 835-amino-acid chain; its full sequence is Leucine--tRNA ligase (835 aa).

A 'HIGH' region motif is present at residues 36 to 46 (PYPSGKIHVGH). The 'KMSKS' region motif lies at 602-606 (KMSKS). Lys-605 contributes to the ATP binding site.

Belongs to the class-I aminoacyl-tRNA synthetase family.

Its subcellular location is the cytoplasm. It carries out the reaction tRNA(Leu) + L-leucine + ATP = L-leucyl-tRNA(Leu) + AMP + diphosphate. The sequence is that of Leucine--tRNA ligase from Rickettsia felis (strain ATCC VR-1525 / URRWXCal2) (Rickettsia azadi).